The primary structure comprises 341 residues: Basic membrane protein D (341 aa).

An N-terminal signal peptide occupies residues 1–16; the sequence is MLKKVYYFLIFLFIVA. Cys17 carries N-palmitoyl cysteine lipidation. The S-diacylglycerol cysteine moiety is linked to residue Cys17.

It belongs to the BMP lipoprotein family. As to quaternary structure, monomer.

Its subcellular location is the cell inner membrane. Its function is as follows. Binds adenosine and inosine. May be part of an ABC-type nucleoside uptake system involved in the purine salvage pathway. The sequence is that of Basic membrane protein D from Borreliella burgdorferi (strain JD1) (Borrelia burgdorferi).